We begin with the raw amino-acid sequence, 293 residues long: 4-diphosphocytidyl-2-C-methyl-D-erythritol kinase (293 aa).

The active site involves Lys-16. Pro-99–Ser-109 is a binding site for ATP. Asp-141 is an active-site residue.

This sequence belongs to the GHMP kinase family. IspE subfamily.

It carries out the reaction 4-CDP-2-C-methyl-D-erythritol + ATP = 4-CDP-2-C-methyl-D-erythritol 2-phosphate + ADP + H(+). Its pathway is isoprenoid biosynthesis; isopentenyl diphosphate biosynthesis via DXP pathway; isopentenyl diphosphate from 1-deoxy-D-xylulose 5-phosphate: step 3/6. Catalyzes the phosphorylation of the position 2 hydroxy group of 4-diphosphocytidyl-2C-methyl-D-erythritol. The polypeptide is 4-diphosphocytidyl-2-C-methyl-D-erythritol kinase (Burkholderia pseudomallei (strain 668)).